Consider the following 152-residue polypeptide: Ribosome maturation factor RimP (152 aa).

Belongs to the RimP family.

It is found in the cytoplasm. Required for maturation of 30S ribosomal subunits. This chain is Ribosome maturation factor RimP, found in Desulfatibacillum aliphaticivorans.